We begin with the raw amino-acid sequence, 180 residues long: Inosine/xanthosine triphosphatase (180 aa).

8–13 (TTNPAK) is a binding site for substrate. Mg(2+)-binding residues include Asp38 and Glu68. 68–69 (EA) provides a ligand contact to substrate.

The protein belongs to the YjjX NTPase family. In terms of assembly, homodimer. Requires Mg(2+) as cofactor. Mn(2+) is required as a cofactor.

It carries out the reaction XTP + H2O = XDP + phosphate + H(+). It catalyses the reaction ITP + H2O = IDP + phosphate + H(+). Functionally, phosphatase that hydrolyzes non-canonical purine nucleotides such as XTP and ITP to their respective diphosphate derivatives. Probably excludes non-canonical purines from DNA/RNA precursor pool, thus preventing their incorporation into DNA/RNA and avoiding chromosomal lesions. This is Inosine/xanthosine triphosphatase from Yersinia pestis bv. Antiqua (strain Antiqua).